The primary structure comprises 152 residues: Xanthine-guanine phosphoribosyltransferase (152 aa).

Residues 37–38 (RG), Arg69, and 88–96 (DDLVDTGGT) each bind 5-phospho-alpha-D-ribose 1-diphosphate. Arg69 contacts GMP. Asp89 is a Mg(2+) binding site. Residues Asp92 and Ile135 each contribute to the guanine site. 2 residues coordinate xanthine: Asp92 and Ile135. Residues 92 to 96 (DTGGT) and 134 to 135 (WI) each bind GMP.

It belongs to the purine/pyrimidine phosphoribosyltransferase family. XGPT subfamily. In terms of assembly, homotetramer. It depends on Mg(2+) as a cofactor.

The protein localises to the cell inner membrane. It catalyses the reaction GMP + diphosphate = guanine + 5-phospho-alpha-D-ribose 1-diphosphate. It carries out the reaction XMP + diphosphate = xanthine + 5-phospho-alpha-D-ribose 1-diphosphate. The enzyme catalyses IMP + diphosphate = hypoxanthine + 5-phospho-alpha-D-ribose 1-diphosphate. It participates in purine metabolism; GMP biosynthesis via salvage pathway; GMP from guanine: step 1/1. Its pathway is purine metabolism; XMP biosynthesis via salvage pathway; XMP from xanthine: step 1/1. Its function is as follows. Purine salvage pathway enzyme that catalyzes the transfer of the ribosyl-5-phosphate group from 5-phospho-alpha-D-ribose 1-diphosphate (PRPP) to the N9 position of the 6-oxopurines guanine and xanthine to form the corresponding ribonucleotides GMP (guanosine 5'-monophosphate) and XMP (xanthosine 5'-monophosphate), with the release of PPi. To a lesser extent, also acts on hypoxanthine. The protein is Xanthine-guanine phosphoribosyltransferase of Enterobacter sp. (strain 638).